The chain runs to 364 residues: Protein Bop (364 aa).

Residues 66–88 (STASGTCGGKPAERGPLAGHMPS) form a disordered region. The BH3 signature appears at 114-128 (LDRFLAQLGDYMSFH). A disordered region spans residues 258-364 (QLTKESTPGP…PGEPPLSPGF (107 aa)). Composition is skewed to pro residues over residues 311–322 (AQRPDPAHPGGP) and 355–364 (PGEPPLSPGF).

Interacts (via BH3 domain) with VDAC1. Interacts with pro-survival Bcl-2 family members, BCL2, BCL2L1 isoform Bcl-X(L), MCL1, BCL2A1 and BCL2L2. Interacts with BAX and BAK1. Ubiquitously expressed.

Its subcellular location is the mitochondrion. Its function is as follows. Could induce apoptosis in a BH3 domain-dependent manner. The direct interaction network of Bcl-2 family members may play a key role in modulation RTL10/BOP intrinsic apoptotic signaling activity. This chain is Protein Bop, found in Homo sapiens (Human).